We begin with the raw amino-acid sequence, 348 residues long: 11-beta-hydroxysteroid dehydrogenase A (348 aa).

Residues 10 to 30 (LIAPPFTFFFLLFFLPPFQIF) traverse the membrane as a helical; Signal-anchor for type II membrane protein segment. The Proline-knob signature appears at 13-26 (PPFTFFFLLFFLPP). NADP(+)-binding positions include 54 to 80 (GASS…AARR), aspartate 105, and 132 to 135 (NAGI). Serine 184 is a substrate binding site. Tyrosine 197 acts as the Proton acceptor in catalysis. Residues 197-201 (YNASK) and lysine 201 contribute to the NADP(+) site.

The protein belongs to the short-chain dehydrogenases/reductases (SDR) family. As to expression, expressed in seeds (at protein level). Not expressed in stem, leaf or root (at protein level).

It localises to the lipid droplet. Its subcellular location is the membrane. It carries out the reaction an 11beta-hydroxysteroid + NADP(+) = an 11-oxosteroid + NADPH + H(+). The enzyme catalyses an 11beta-hydroxysteroid + NAD(+) = an 11-oxosteroid + NADH + H(+). The catalysed reaction is corticosterone + NADP(+) = 11-dehydrocorticosterone + NADPH + H(+). It catalyses the reaction corticosterone + NAD(+) = 11-dehydrocorticosterone + NADH + H(+). It carries out the reaction 17beta-estradiol + NADP(+) = estrone + NADPH + H(+). The enzyme catalyses 17beta-estradiol + NAD(+) = estrone + NADH + H(+). In terms of biological role, has dehydrogenase activity against corticosterone (11 beta-hydroxysteroid) and estradiol (17 beta-hydroxysteroid), with higher activity against estradiol. Possesses higher dehydrogenase activity with NADP(+) than NAD(+) regardless of the sterol substrate. May be involved in signal transduction regulated by various sterols. The polypeptide is 11-beta-hydroxysteroid dehydrogenase A (Sesamum indicum (Oriental sesame)).